We begin with the raw amino-acid sequence, 307 residues long: Cytidine deaminase 7 (307 aa).

2 CMP/dCMP-type deaminase domains span residues 22-155 (TEPI…FTPD) and 185-307 (SDCS…FITE). 63–65 (NVE) contributes to the substrate binding site. H76 contributes to the Zn(2+) binding site. The active-site Proton donor is the E78. Zn(2+) contacts are provided by C111 and C114.

Belongs to the cytidine and deoxycytidylate deaminase family. In terms of assembly, homodimer. Zn(2+) is required as a cofactor.

It carries out the reaction cytidine + H2O + H(+) = uridine + NH4(+). The enzyme catalyses 2'-deoxycytidine + H2O + H(+) = 2'-deoxyuridine + NH4(+). This enzyme scavenges exogenous and endogenous cytidine and 2'-deoxycytidine for UMP synthesis. In Arabidopsis thaliana (Mouse-ear cress), this protein is Cytidine deaminase 7 (CDA7).